Reading from the N-terminus, the 93-residue chain is UPF0367 protein tsr0804 (93 aa).

This sequence belongs to the UPF0367 family.

The chain is UPF0367 protein tsr0804 from Thermosynechococcus vestitus (strain NIES-2133 / IAM M-273 / BP-1).